A 118-amino-acid chain; its full sequence is Urease subunit beta (118 aa).

It belongs to the urease beta subunit family. Heterotrimer of UreA (gamma), UreB (beta) and UreC (alpha) subunits. Three heterotrimers associate to form the active enzyme.

It localises to the cytoplasm. The enzyme catalyses urea + 2 H2O + H(+) = hydrogencarbonate + 2 NH4(+). It participates in nitrogen metabolism; urea degradation; CO(2) and NH(3) from urea (urease route): step 1/1. This is Urease subunit beta from Aliivibrio fischeri (strain ATCC 700601 / ES114) (Vibrio fischeri).